Consider the following 1081-residue polypeptide: MPRRKQQAPRRAAAYVSEELKAAALVDEGLDPEEHTADGEPSAKYMCPEKELARACPSYQNSPAAEFSCHEMDSESHISETSDRMADFESGSIKNEEETKEVTVPLEDTTVSDSLEQMKAVYNNFLSNSYWSNLNLNLHQPSSEKNNGSSSSSSSSSSSCGSGSFDWHQSAMAKTLQQVSQSRMLPEPSLFSTVQLYRQSSKLYGSIFTGASKFRCKDCSAAYDTLVELTVHMNETGHYRDDNHETDNNNPKRWSKPRKRSLLEMEGKEDAQKVLKCMYCGHSFESLQDLSVHMIKTKHYQKVPLKEPVTPVAAKIIPATRKKASLELELPSSPDSTGGTPKATISDTNDALQKNSNPYITPNNRYGHQNGASYAWHFEARKSQILKCMECGSSHDTLQELTAHMMVTGHFIKVTNSAMKKGKPIVETPVTPTITTLLDEKVQSVPLAATTFTSPSNTPASISPKLNVEVKKEVDKEKAVTDEKPKQKDKPGEEEEKCDISSKYHYLTENDLEESPKGGLDILKSLENTVTSAINKAQNGTPSWGGYPSIHAAYQLPNMMKLSLGSSGKSTPLKPMFGNSEIVSPTKNQTLVSPPSSQTSPMPKTNFHAMEELVKKVTEKVAKVEEKMKEPDGKLSPPKRATPSPCSSEVGEPIKMEASSDGGFRSQENSPSPPRDGCKDGSPLAEPVENGKELVKPLASSLSGSTAIITDHPPEQPFVNPLSALQSVMNIHLGKAAKPSLPALDPMSMLFKMSNSLAEKAAVATPPPLQSKKADHLDRYFYHVNNDQPIDLTKGKSDKGCSLGSVLLSPTSTAPATSSSTVTTAKTSAVVSFMSNSPLRENALSDISDMLKNLTESHTSKSSTPSSISEKSDIDGATLEEAEESTPAQKRKGRQSNWNPQHLLILQAQFAASLRQTSEGKYIMSDLSPQERMHISRFTGLSMTTISHWLANVKYQLRRTGGTKFLKNLDTGHPVFFCNDCASQIRTPSTYISHLESHLGFRLRDLSKLSTEQINSQIAQTKSPSEKMVTSSPEEDLGTSYQCKLCNRTFASKHAVKLHLSKTHGKSPEDHLLYVSELEKQ.

Disordered stretches follow at residues 141–161 (PSSE…SSCG) and 238–257 (HYRD…WSKP). The span at 148–161 (GSSSSSSSSSSSCG) shows a compositional bias: low complexity. 2 consecutive C2H2-type zinc fingers follow at residues 214 to 238 (FRCK…ETGH) and 275 to 299 (LKCM…KTKH). Basic and acidic residues predominate over residues 238-247 (HYRDDNHETD). The segment at 325–364 (SLELELPSSPDSTGGTPKATISDTNDALQKNSNPYITPNN) is disordered. The span at 335–364 (DSTGGTPKATISDTNDALQKNSNPYITPNN) shows a compositional bias: polar residues. The C2H2-type 3; atypical zinc-finger motif lies at 386 to 404 (LKCMECGSSHDTLQELTAH). Residues 473–491 (EVDKEKAVTDEKPKQKDKP) are compositionally biased toward basic and acidic residues. Disordered stretches follow at residues 473–502 (EVDK…DISS), 579–604 (NSEI…PMPK), 626–687 (EKMK…LAEP), and 855–897 (TESH…RQSN). The span at 581 to 603 (EIVSPTKNQTLVSPPSSQTSPMP) shows a compositional bias: polar residues. Residues 606–630 (NFHAMEELVKKVTEKVAKVEEKMKE) adopt a coiled-coil conformation. Serine 682 is modified (phosphoserine). Positions 856–869 (ESHTSKSSTPSSIS) are enriched in low complexity. The segment at residues 891–961 (RKGRQSNWNP…NVKYQLRRTG (71 aa)) is a DNA-binding region (homeobox; atypical). 2 C2H2-type zinc fingers span residues 976–998 (FFCN…LESH) and 1041–1064 (YQCK…SKTH).

This sequence belongs to the teashirt C2H2-type zinc-finger protein family. Interacts (via homeobox domain) with APBB1 (via PID domain 1). Interacts (via N-terminus) with HDAC1 and HDAC2; the interaction is direct. Found in a trimeric complex with APBB1 and HDAC1; the interaction between HDAC1 and APBB1 is mediated by TSHZ3. As to expression, expressed in brain; strongly reduced in post-mortem elderly subjects with Alzheimer disease. Expressed in the fetal neocortex.

The protein resides in the nucleus. It localises to the cell projection. The protein localises to the growth cone. Transcriptional regulator involved in developmental processes. Functions in association with APBB1, SET and HDAC factors as a transcriptional repressor, that inhibits the expression of CASP4. TSHZ3-mediated transcription repression involves the recruitment of histone deacetylases HDAC1 and HDAC2. Associates with chromatin in a region surrounding the CASP4 transcriptional start site(s). Regulates the development of neurons involved in both respiratory rhythm and airflow control. Promotes maintenance of nucleus ambiguus (nA) motoneurons, which govern upper airway function, and establishes a respiratory rhythm generator (RRG) activity compatible with survival at birth. Involved in the differentiation of the proximal uretic smooth muscle cells during developmental processes. Involved in the up-regulation of myocardin, that directs the expression of smooth muscle cells in the proximal ureter. Involved in the modulation of glutamatergic synaptic transmission and long-term synaptic potentiation. This Homo sapiens (Human) protein is Teashirt homolog 3 (TSHZ3).